The sequence spans 219 residues: Probable GTP-binding protein EngB (219 aa).

An EngB-type G domain is found at 24–207; sequence VQPEIAFAGR…HELIESWLRP (184 aa). Residues 32-39, 59-63, 81-84, 148-151, and 186-188 each bind GTP; these read GRSNAGKS, GRTQH, DLPG, TKCD, and FSA. Serine 39 and threonine 61 together coordinate Mg(2+).

Belongs to the TRAFAC class TrmE-Era-EngA-EngB-Septin-like GTPase superfamily. EngB GTPase family. Mg(2+) serves as cofactor.

In terms of biological role, necessary for normal cell division and for the maintenance of normal septation. The protein is Probable GTP-binding protein EngB of Burkholderia ambifaria (strain ATCC BAA-244 / DSM 16087 / CCUG 44356 / LMG 19182 / AMMD) (Burkholderia cepacia (strain AMMD)).